The primary structure comprises 39 residues: Photosystem II reaction center protein X (39 aa).

A helical membrane pass occupies residues 10–30; sequence SSLVWAAVIVVIPAAVALVLI.

It belongs to the PsbX family. Type 1 subfamily. In terms of assembly, PSII is composed of 1 copy each of membrane proteins PsbA, PsbB, PsbC, PsbD, PsbE, PsbF, PsbH, PsbI, PsbJ, PsbK, PsbL, PsbM, PsbT, PsbX, PsbY, Psb30/Ycf12, peripheral proteins PsbO, CyanoQ (PsbQ), PsbU, PsbV and a large number of cofactors. It forms dimeric complexes.

It is found in the cellular thylakoid membrane. Involved in the binding and/or turnover of quinones at the Q(B) site of photosystem II (PSII). PSII is a light-driven water plastoquinone oxidoreductase, using light energy to abstract electrons from H(2)O, generating a proton gradient subsequently used for ATP formation. This is Photosystem II reaction center protein X from Prochlorococcus marinus (strain MIT 9303).